Consider the following 223-residue polypeptide: ATP phosphoribosyltransferase (223 aa).

This sequence belongs to the ATP phosphoribosyltransferase family. Short subfamily. As to quaternary structure, heteromultimer composed of HisG and HisZ subunits.

It is found in the cytoplasm. It catalyses the reaction 1-(5-phospho-beta-D-ribosyl)-ATP + diphosphate = 5-phospho-alpha-D-ribose 1-diphosphate + ATP. It participates in amino-acid biosynthesis; L-histidine biosynthesis; L-histidine from 5-phospho-alpha-D-ribose 1-diphosphate: step 1/9. Catalyzes the condensation of ATP and 5-phosphoribose 1-diphosphate to form N'-(5'-phosphoribosyl)-ATP (PR-ATP). Has a crucial role in the pathway because the rate of histidine biosynthesis seems to be controlled primarily by regulation of HisG enzymatic activity. This chain is ATP phosphoribosyltransferase, found in Bordetella pertussis (strain Tohama I / ATCC BAA-589 / NCTC 13251).